A 153-amino-acid polypeptide reads, in one-letter code: MKTYSAKPAEIEKKWVVIDASGLVVGRLATIIAMRLKGKHLPIYTPHVDCGDNIVVVNAEKAVFTGRKKDQKVYYHHTGFPGGIKERTAKFVLEGRFPERVIEKAVERMLARGPLGRKIMGNLRVYKGPSHPHEAQQPVALDVAALNRKNVRN.

It belongs to the universal ribosomal protein uL13 family. As to quaternary structure, part of the 50S ribosomal subunit.

Functionally, this protein is one of the early assembly proteins of the 50S ribosomal subunit, although it is not seen to bind rRNA by itself. It is important during the early stages of 50S assembly. This is Large ribosomal subunit protein uL13 from Xanthobacter autotrophicus (strain ATCC BAA-1158 / Py2).